The sequence spans 169 residues: Ribosome maturation factor RimM (169 aa).

In terms of domain architecture, PRC barrel spans 96–166 (EDEFYFADLI…AVVVRPVEVE (71 aa)).

It belongs to the RimM family. As to quaternary structure, binds ribosomal protein uS19.

Its subcellular location is the cytoplasm. In terms of biological role, an accessory protein needed during the final step in the assembly of 30S ribosomal subunit, possibly for assembly of the head region. Essential for efficient processing of 16S rRNA. May be needed both before and after RbfA during the maturation of 16S rRNA. It has affinity for free ribosomal 30S subunits but not for 70S ribosomes. The sequence is that of Ribosome maturation factor RimM from Acidiphilium cryptum (strain JF-5).